Consider the following 61-residue polypeptide: Metallothionein-1 (61 aa).

An N-acetylmethionine modification is found at methionine 1. The beta stretch occupies residues 1–29; it reads MDPNCSCPTGGSCTCAGSCKCKACRCPSC. Residues cysteine 5, cysteine 7, cysteine 13, cysteine 15, cysteine 19, cysteine 21, cysteine 24, cysteine 26, cysteine 29, cysteine 33, cysteine 34, cysteine 36, cysteine 37, cysteine 41, cysteine 44, cysteine 48, cysteine 50, cysteine 57, cysteine 59, and cysteine 60 each contribute to the a divalent metal cation site. The interval 30–61 is alpha; that stretch reads KKSCCSCCPVGCAKCAQGCVCKGASDKCSCCA.

This sequence belongs to the metallothionein superfamily. Type 1 family. As to quaternary structure, monomer.

Metallothioneins have a high content of cysteine residues that bind various heavy metals; these proteins are transcriptionally regulated by both heavy metals and glucocorticoids. This is Metallothionein-1 (MT1) from Bos taurus (Bovine).